A 97-amino-acid chain; its full sequence is Protein RESPONSE TO LOW SULFUR 3 (97 aa).

Residues 8–42 (VTVAAEEVEELRRRNGELEREMEEMKKEMVQLWRR) adopt a coiled-coil conformation.

In Arabidopsis thaliana (Mouse-ear cress), this protein is Protein RESPONSE TO LOW SULFUR 3.